Reading from the N-terminus, the 757-residue chain is Mitofusin-2 (757 aa).

The Cytoplasmic segment spans residues 1–604 (MSLLFSRCNS…TQEELMVSMV (604 aa)). Residues 30–94 (KHFVTAKKKI…VRGISEVLAR (65 aa)) form a part of a helix bundle domain, formed by helices from N-terminal and C-terminal regions region. Residues 93–342 (ARRHMKVAFF…VRMFEFQNFE (250 aa)) enclose the Dynamin-type G domain. The segment at 103 to 110 (GRTSNGKS) is G1 motif. GTP is bound at residue 106 to 111 (SNGKST). Thr-111 bears the Phosphothreonine; by PINK1 mark. Residues 129-130 (TT) are G2 motif. A G3 motif region spans residues 199–202 (DSPG). Residue 258–261 (NRWD) coordinates GTP. A G4 motif region spans residues 258–261 (NRWD). Residue Glu-288 is a region of interest, G5 motif. Residues Ser-305 and Lys-307 each contribute to the GTP site. The interval 359-385 (EQHTVRAKQIAEAVRLIMDSLHIAAQE) is part of a helix bundle domain, formed by helices from N-terminal and C-terminal regions. Positions 406–434 (KQLELLAQDYKLRIKQITEEVERQVSTAM) form a coiled coil. Ser-442 carries the phosphoserine modification. The chain crosses the membrane as a helical span at residues 605 to 625 (TGLASLTSRTSMGILVVGGVV). Residue Trp-626 is a topological domain, mitochondrial intermembrane. The helical transmembrane segment at 627–647 (KAVGWRLIALSFGLYGLLYVY) threads the bilayer. Over 648–757 (ERLTWTTKAK…FTHQYLQPSR (110 aa)) the chain is Cytoplasmic. The stretch at 696–738 (FAHLCQQVDITRDNLEQEIAAMNKKVEALDSLQSRAKLLRNKA) forms a coiled coil. The part of a helix bundle domain, formed by helices from N-terminal and C-terminal regions stretch occupies residues 722–753 (EALDSLQSRAKLLRNKAGWLDSELNMFTHQYL).

Belongs to the TRAFAC class dynamin-like GTPase superfamily. Dynamin/Fzo/YdjA family. Mitofusin subfamily. In terms of assembly, forms homomultimers and heteromultimers with MFN1. Oligomerization is essential for mitochondrion fusion. Interacts with VAT1. Interacts with STOML2; may form heterooligomers. Interacts (phosphorylated) with PRKN. Interacts with EIF2AK3. Interacts with THG1L; THG1L probably functions as a guanyl-nucleotide exchange factor/GEF, activating MFN2. In terms of processing, phosphorylated by PINK1. Ubiquitinated by non-degradative ubiquitin by PRKN, promoting mitochondrial fusion; deubiquitination by USP30 inhibits mitochondrial fusion. Ubiquitinated by HUWE1 when dietary stearate (C18:0) levels are low; ubiquitination inhibits mitochondrial fusion. In terms of tissue distribution, ubiquitous. Expression is markedly reduced in ApoE-knockout mouse atherosclerotic arteries.

It is found in the mitochondrion outer membrane. It catalyses the reaction GTP + H2O = GDP + phosphate + H(+). In terms of biological role, mitochondrial outer membrane GTPase that mediates mitochondrial clustering and fusion. Mitochondria are highly dynamic organelles, and their morphology is determined by the equilibrium between mitochondrial fusion and fission events. Overexpression induces the formation of mitochondrial networks. Membrane clustering requires GTPase activity and may involve a major rearrangement of the coiled coil domains. Plays a central role in mitochondrial metabolism and may be associated with obesity and/or apoptosis processes. Plays an important role in the regulation of vascular smooth muscle cell proliferation. Involved in the clearance of damaged mitochondria via selective autophagy (mitophagy). Is required for PRKN recruitment to dysfunctional mitochondria. Involved in the control of unfolded protein response (UPR) upon ER stress including activation of apoptosis and autophagy during ER stress. Acts as an upstream regulator of EIF2AK3 and suppresses EIF2AK3 activation under basal conditions. The polypeptide is Mitofusin-2 (Mfn2) (Mus musculus (Mouse)).